Reading from the N-terminus, the 607-residue chain is Actin-related protein 5 (607 aa).

K283 is covalently cross-linked (Glycyl lysine isopeptide (Lys-Gly) (interchain with G-Cter in SUMO2)). Coiled coils occupy residues 288–327 (TLTSEEKQERRQQQLRRLQELNARRREEKLQLDQERLDRL) and 355–384 (EELQSYIQKLSIAVEQAKQKILQAEVNLEV). A compositionally biased stretch (low complexity) spans 584–596 (SRSSDAQASSKGS). The tract at residues 584 to 607 (SRSSDAQASSKGSAAGGGGAGEQA) is disordered. Gly residues predominate over residues 597-607 (AAGGGGAGEQA).

It belongs to the actin family. ARP5 subfamily. In terms of assembly, component of the chromatin remodeling INO80 complex; specifically part of a complex module associated with the helicase ATP-binding and the helicase C-terminal domain of INO80. Interacts with DDB1. Interacts with ACTR8; the interaction is observed in asynchronous (interphase) cells but not in metaphase-arrested cells indicative for a possible dissociation of the INO80 complex in mitotic cells.

It localises to the nucleus. Its subcellular location is the cytoplasm. In terms of biological role, proposed core component of the chromatin remodeling INO80 complex which is involved in transcriptional regulation, DNA replication and probably DNA repair. Involved in DNA double-strand break repair and UV-damage excision repair. This is Actin-related protein 5 (ACTR5) from Homo sapiens (Human).